Consider the following 574-residue polypeptide: K(+)/H(+) antiporter NhaP2 (574 aa).

The next 13 helical transmembrane spans lie at 6 to 26 (INSF…LSPV), 34 to 54 (ILLI…GGIL), 58 to 78 (YSTA…DGGM), 87 to 107 (VALW…TSIT), 109 to 129 (VMAA…GAIV), 173 to 193 (IAIL…ISFI), 196 to 216 (FGLG…LVNL), 219 to 239 (LAEG…YAAS), 242 to 262 (LGGS…NKPT), 271 to 291 (VLDG…GLLL), 299 to 319 (IWLP…PLAV), 335 to 355 (WFIS…VFPM), and 359 to 379 (LPGA…SLLV). The region spanning 405–486 (SGVEIYPSSE…LEALSNLFSQ (82 aa)) is the RCK C-terminal domain.

It belongs to the monovalent cation:proton antiporter 1 (CPA1) transporter (TC 2.A.36) family. NhaP2 subfamily.

Its subcellular location is the cell inner membrane. It catalyses the reaction K(+)(in) + H(+)(out) = K(+)(out) + H(+)(in). Its function is as follows. K(+)/H(+) antiporter that extrudes potassium in exchange for external protons and maintains the internal concentration of potassium under toxic levels. The protein is K(+)/H(+) antiporter NhaP2 of Shewanella sp. (strain MR-7).